We begin with the raw amino-acid sequence, 441 residues long: MPYFDNISTIAYEGPASKNPLAFKFYNPEEKVGDKTMEEHLRFSVAYWHTFTGDGSDPFGAGNMIRPWNKYSGMDLAKARVEAAFEFFEKLNIPFFCFHDVDIAPEGETLKETYKNLDIIVDMIEEYMKTSKTKLLWNTANLFTHPRFVHGAATSCNADVFAYAAAKVKKGLEIAKRLGAENYVFWGGREGYETLLNTDMKLELDNLARFLHMAVDYAKEIGFDGQFLIEPKPKEPTKHQYDFDVATALAFLQTYGLKDYFKFNIEANHATLAGHTFEHELRVARIHGMLGSVDANQGDMLLGWDTDEFPTDLYSTTLAMYEILKNGGLGRGGLNFDAKVRRGSFEPEDLFYAHIAGMDSFAVGLKVAHRLIEDRVFDEFIEERYKSYTEGIGREIVEGTVDFHKLEAHALQLGEIQNQSGRQERLKTLLNQYLLEVCAAR.

Residues histidine 99 and aspartate 102 contribute to the active site. Mg(2+)-binding residues include glutamate 230, glutamate 266, histidine 269, aspartate 294, aspartate 305, aspartate 307, and aspartate 337.

Belongs to the xylose isomerase family. Homotetramer. Requires Mg(2+) as cofactor.

The protein resides in the cytoplasm. The enzyme catalyses alpha-D-xylose = alpha-D-xylulofuranose. In terms of biological role, exhibits xylose isomerase activity. This chain is Xylose isomerase (xylA), found in Bacillus sp. (strain LW2).